Reading from the N-terminus, the 197-residue chain is Small ribosomal subunit protein uS4 (197 aa).

In terms of domain architecture, S4 RNA-binding spans 87-147; it reads LRLDNVLFRL…EKSKSSARYK (61 aa).

This sequence belongs to the universal ribosomal protein uS4 family. Part of the 30S ribosomal subunit. Contacts protein S5. The interaction surface between S4 and S5 is involved in control of translational fidelity.

Functionally, one of the primary rRNA binding proteins, it binds directly to 16S rRNA where it nucleates assembly of the body of the 30S subunit. Its function is as follows. With S5 and S12 plays an important role in translational accuracy. This Lachnospira eligens (strain ATCC 27750 / DSM 3376 / VPI C15-48 / C15-B4) (Eubacterium eligens) protein is Small ribosomal subunit protein uS4.